The chain runs to 155 residues: Small ribosomal subunit protein uS7 (155 aa).

Belongs to the universal ribosomal protein uS7 family. As to quaternary structure, part of the 30S ribosomal subunit. Contacts proteins S9 and S11.

Its function is as follows. One of the primary rRNA binding proteins, it binds directly to 16S rRNA where it nucleates assembly of the head domain of the 30S subunit. Is located at the subunit interface close to the decoding center, probably blocks exit of the E-site tRNA. The chain is Small ribosomal subunit protein uS7 from Corynebacterium aurimucosum (strain ATCC 700975 / DSM 44827 / CIP 107346 / CN-1) (Corynebacterium nigricans).